The primary structure comprises 537 residues: Myosin-binding protein H (537 aa).

The span at 1–25 (MTGKTAPAAAKKAPAAKKAPAPASK) shows a compositional bias: low complexity. The interval 1-138 (MTGKTAPAAA…KPKEEPPSVP (138 aa)) is disordered. The span at 26–69 (KAPEPAPKEKPAPTPKEGHAPTPKEEHAPPPKEEHAPPPKEEHA) shows a compositional bias: basic and acidic residues. Residues 87–104 (EQPAAPAAEHAPTPTHEA) are compositionally biased toward low complexity. Residues 112–124 (PPPAAPAEAPAPE) show a composition bias toward pro residues. In terms of domain architecture, Fibronectin type-III 1 spans 137–232 (VPLSLAVEEV…LEQPVLIREI (96 aa)). The 89-residue stretch at 236–324 (PRIRLPRQLR…NGAEDKAILD (89 aa)) folds into the Ig-like C2-type 1 domain. The 96-residue stretch at 333-428 (PPQNLKLVDV…AAGVAHIKKT (96 aa)) folds into the Fibronectin type-III 2 domain. Residues 444 to 528 (PKFTQPLTDR…VNPLGEASVD (85 aa)) form the Ig-like C2-type 2 domain.

Belongs to the immunoglobulin superfamily. MyBP family. In terms of tissue distribution, skeletal muscle. Seems to be also expressed in the slow tonic ald muscle. Not detected in gizzard or heart.

Its function is as follows. Binds to myosin; probably involved in interaction with thick myofilaments in the A-band. In Gallus gallus (Chicken), this protein is Myosin-binding protein H (MYBPH).